Consider the following 634-residue polypeptide: Glutamyl-tRNA(Gln) amidotransferase subunit E (634 aa).

Belongs to the GatB/GatE family. GatE subfamily. As to quaternary structure, heterodimer of GatD and GatE.

It carries out the reaction L-glutamyl-tRNA(Gln) + L-glutamine + ATP + H2O = L-glutaminyl-tRNA(Gln) + L-glutamate + ADP + phosphate + H(+). Functionally, allows the formation of correctly charged Gln-tRNA(Gln) through the transamidation of misacylated Glu-tRNA(Gln) in organisms which lack glutaminyl-tRNA synthetase. The reaction takes place in the presence of glutamine and ATP through an activated gamma-phospho-Glu-tRNA(Gln). The GatDE system is specific for glutamate and does not act on aspartate. This chain is Glutamyl-tRNA(Gln) amidotransferase subunit E, found in Sulfolobus acidocaldarius (strain ATCC 33909 / DSM 639 / JCM 8929 / NBRC 15157 / NCIMB 11770).